The chain runs to 248 residues: DCN1-like protein 4 (248 aa).

The disordered stretch occupies residues Met1–Gln35. A compositionally biased stretch (polar residues) spans Thr26 to Gln35. Residues Phe47–Arg235 form the DCUN1 domain.

The protein resides in the nucleus. Its function is as follows. Inhibits neddylation of cullin components of SCF-type E3 ubiquitin ligase complexes and thus regulates SCF-type complex activity. Essential for development. Function inhibits cell proliferation and cell growth. In Drosophila melanogaster (Fruit fly), this protein is DCN1-like protein 4.